Consider the following 362-residue polypeptide: P2Y purinoceptor 1 (362 aa).

The Extracellular portion of the chain corresponds to 1–40 (MTEALISAALNGTQPELLAGGWAAGNASTKCSLTKTGFQF). 2 N-linked (GlcNAc...) asparagine glycosylation sites follow: asparagine 11 and asparagine 26. 2 disulfides stabilise this stretch: cysteine 31-cysteine 285 and cysteine 113-cysteine 191. Residue lysine 35 participates in ADP binding. Residues 41 to 63 (YYLPTVYILVFITGFLGNSVAIW) traverse the membrane as a helical segment. The Cytoplasmic portion of the chain corresponds to 64 to 76 (MFVFHMRPWSGIS). The chain crosses the membrane as a helical span at residues 77-98 (VYMFNLALADFLYVLTLPALIF). Residues 99 to 114 (YYFNKTDWIFGDVMCK) are Extracellular-facing. N-linked (GlcNAc...) asparagine glycosylation is present at asparagine 102. A helical membrane pass occupies residues 115-136 (LQRFIFHVNLYGSILFLTCISV). Topologically, residues 137–155 (HRYTGVVHPLKSLGRLKKK) are cytoplasmic. A helical transmembrane segment spans residues 156–177 (NAVYVSSLVWALVVAVIAPILF). Over 178–203 (YSGTGVRRNKTITCYDTTADEYLRSY) the chain is Extracellular. N-linked (GlcNAc...) asparagine glycosylation is present at asparagine 186. Residue 192–194 (YDT) participates in ADP binding. A helical transmembrane segment spans residues 204 to 226 (FVYSMCTTVFMFCIPFIVILGCY). Residues 227-249 (GLIVKALIYKDLDNSPLRRKSIY) lie on the Cytoplasmic side of the membrane. A helical transmembrane segment spans residues 250–273 (LVIIVLTVFAVSYLPFHVMKTLNL). Residues 272-276 (NLRAR), 292-295 (YATY), and arginine 299 each bind ADP. At 274–292 (RARLDFQTPQMCAFNDKVY) the chain is on the extracellular side. Residues 293–314 (ATYQVTRGLASLNSCVDPILYF) form a helical membrane-spanning segment. Residues 315-362 (LAGDTFRRRLSRATRKSSRRSEPNVQSKSEEMTLNILTEYKQNGDTSL) are Cytoplasmic-facing.

This sequence belongs to the G-protein coupled receptor 1 family. As to expression, mainly found in blood, brain, and lung. To a lesser extent in stomach, gut and skeletal muscle.

Its subcellular location is the cell membrane. Functionally, receptor for extracellular adenine nucleotides such as ADP. In platelets, binding to ADP leads to mobilization of intracellular calcium ions via activation of phospholipase C, a change in platelet shape, and ultimately platelet aggregation. The sequence is that of P2Y purinoceptor 1 (P2RY1) from Meleagris gallopavo (Wild turkey).